We begin with the raw amino-acid sequence, 248 residues long: 4-hydroxy-tetrahydrodipicolinate reductase (248 aa).

13-18 contacts NAD(+); the sequence is GITGRL. Position 36 (Arg-36) interacts with NADP(+). NAD(+) is bound by residues 84 to 86 and 108 to 111; these read GTT and AANF. His-140 acts as the Proton donor/acceptor in catalysis. His-141 is a (S)-2,3,4,5-tetrahydrodipicolinate binding site. The Proton donor role is filled by Lys-144. 150 to 151 serves as a coordination point for (S)-2,3,4,5-tetrahydrodipicolinate; sequence GT.

Belongs to the DapB family.

It is found in the cytoplasm. It catalyses the reaction (S)-2,3,4,5-tetrahydrodipicolinate + NAD(+) + H2O = (2S,4S)-4-hydroxy-2,3,4,5-tetrahydrodipicolinate + NADH + H(+). The enzyme catalyses (S)-2,3,4,5-tetrahydrodipicolinate + NADP(+) + H2O = (2S,4S)-4-hydroxy-2,3,4,5-tetrahydrodipicolinate + NADPH + H(+). The protein operates within amino-acid biosynthesis; L-lysine biosynthesis via DAP pathway; (S)-tetrahydrodipicolinate from L-aspartate: step 4/4. Its function is as follows. Catalyzes the conversion of 4-hydroxy-tetrahydrodipicolinate (HTPA) to tetrahydrodipicolinate. In Gluconobacter oxydans (strain 621H) (Gluconobacter suboxydans), this protein is 4-hydroxy-tetrahydrodipicolinate reductase.